We begin with the raw amino-acid sequence, 261 residues long: MFDKLSIIFNSDRKRKVHLSKAITEISLKLKEQQDRLDEAIRRLRERDKDLFEKVIRSQIEGDIARATIYAQEISDIRKMIKIIYTAYLAIEKVRLKLDTVQELQGVSLVLFPVMRILGELKEQVRGIAPEVALALDSITSSVNSIAIETGALSEKTFVPTVADEQAKQIMEEAQKMAEVKVRELLPELPHPPSELPKRVAKQVQSSNKKSLSEDMILNYIKTTGGFIDVDYIAKNFDVSKDEVFNVLRRLEEKGLIVLEG.

Residues 213–261 are winged-helix-like fold; it reads SEDMILNYIKTTGGFIDVDYIAKNFDVSKDEVFNVLRRLEEKGLIVLEG.

In terms of assembly, interacts with CdvA. Interacts with CdvC.

It is found in the cytoplasm. The protein localises to the nucleoid. In terms of biological role, part of a cell division machinery. The CdvA, CdvB and CdvC proteins polymerize between segregating nucleoids and persist throughout cell division, forming a successively smaller structure during constriction. The chain is Cell division protein B from Sulfolobus acidocaldarius (strain ATCC 33909 / DSM 639 / JCM 8929 / NBRC 15157 / NCIMB 11770).